Consider the following 485-residue polypeptide: Protein nucleotidyltransferase YdiU (485 aa).

Residues G85, G87, R88, K108, D120, G121, R171, and R178 each coordinate ATP. D249 functions as the Proton acceptor in the catalytic mechanism. Positions 250 and 259 each coordinate Mg(2+). D259 contributes to the ATP binding site. The segment at 462 to 485 (LPTTPNYQDPPADGDRSYQTFCGT) is disordered.

It belongs to the SELO family. Mg(2+) serves as cofactor. The cofactor is Mn(2+).

The catalysed reaction is L-seryl-[protein] + ATP = 3-O-(5'-adenylyl)-L-seryl-[protein] + diphosphate. It carries out the reaction L-threonyl-[protein] + ATP = 3-O-(5'-adenylyl)-L-threonyl-[protein] + diphosphate. It catalyses the reaction L-tyrosyl-[protein] + ATP = O-(5'-adenylyl)-L-tyrosyl-[protein] + diphosphate. The enzyme catalyses L-histidyl-[protein] + UTP = N(tele)-(5'-uridylyl)-L-histidyl-[protein] + diphosphate. The catalysed reaction is L-seryl-[protein] + UTP = O-(5'-uridylyl)-L-seryl-[protein] + diphosphate. It carries out the reaction L-tyrosyl-[protein] + UTP = O-(5'-uridylyl)-L-tyrosyl-[protein] + diphosphate. Its function is as follows. Nucleotidyltransferase involved in the post-translational modification of proteins. It can catalyze the addition of adenosine monophosphate (AMP) or uridine monophosphate (UMP) to a protein, resulting in modifications known as AMPylation and UMPylation. The sequence is that of Protein nucleotidyltransferase YdiU from Teredinibacter turnerae (strain ATCC 39867 / T7901).